The following is a 168-amino-acid chain: Coiled-coil domain-containing protein 200 (168 aa).

Positions 16-50 form a coiled coil; sequence LDRRRWLMAQQQQELQQKEQELKNHQEEEQQSEEK. The interval 23 to 168 is disordered; it reads MAQQQQELQQ…LKSTNYIQQW (146 aa). Residues 31–52 are compositionally biased toward basic and acidic residues; it reads QQKEQELKNHQEEEQQSEEKLQ. Positions 70-82 are enriched in low complexity; it reads SQEQPQPSQQQPS. Composition is skewed to pro residues over residues 83 to 94 and 104 to 117; these read VQPPSQPPPQPS and GPQP…PQPT. Polar residues-rich tracts occupy residues 124–138 and 145–168; these read RCTQ…QDSQ and PCQS…IQQW.

This Homo sapiens (Human) protein is Coiled-coil domain-containing protein 200.